The following is a 653-amino-acid chain: Alpha-L-iduronidase (653 aa).

Residues Met1–Glu27 form the signal peptide. 3 residues coordinate alpha-D-mannopyranose: Pro54, Leu56, and His58. Alpha-L-iduronate is bound at residue His91. N-linked (GlcNAc...) asparagine glycosylation occurs at Asn110. Asn181 and Glu182 together coordinate alpha-L-iduronate. Glu182 serves as the catalytic Proton donor. Residue Asn190 is glycosylated (N-linked (GlcNAc...) asparagine). Residues Lys264, Glu299, and Gly305 each coordinate alpha-L-iduronate. The active-site Nucleophile is Glu299. Residue Trp306 coordinates alpha-D-mannopyranose. Asn336 carries an N-linked (GlcNAc...) asparagine glycan. Alpha-L-iduronate is bound by residues Asp349 and Arg363. Residues Asn372, Asn415, and Asn451 are each glycosylated (N-linked (GlcNAc...) asparagine). Alpha-D-mannopyranose-binding residues include Arg488 and Arg492. Arg492 contributes to the beta-D-mannose binding site. A disulfide bond links Cys541 and Cys577.

It belongs to the glycosyl hydrolase 39 family. Monomer. N-glycosylation at Asn-372 contributes to substrate binding and is required for full enzymatic activity. In terms of tissue distribution, ubiquitous.

It localises to the lysosome. It catalyses the reaction Hydrolysis of unsulfated alpha-L-iduronosidic linkages in dermatan sulfate.. The polypeptide is Alpha-L-iduronidase (IDUA) (Homo sapiens (Human)).